We begin with the raw amino-acid sequence, 170 residues long: Small ribosomal subunit protein uS5 (170 aa).

In terms of domain architecture, S5 DRBM spans Leu-13 to Val-76.

Belongs to the universal ribosomal protein uS5 family. In terms of assembly, part of the 30S ribosomal subunit. Contacts proteins S4 and S8.

With S4 and S12 plays an important role in translational accuracy. In terms of biological role, located at the back of the 30S subunit body where it stabilizes the conformation of the head with respect to the body. The polypeptide is Small ribosomal subunit protein uS5 (Nitrosococcus oceani (strain ATCC 19707 / BCRC 17464 / JCM 30415 / NCIMB 11848 / C-107)).